The chain runs to 418 residues: Vasopressin V1a receptor (418 aa).

The span at 1-15 (MRFSGSPSPGPSNSS) shows a compositional bias: low complexity. The disordered stretch occupies residues 1 to 20 (MRFSGSPSPGPSNSSRWWPL). At 1 to 51 (MRFSGSPSPGPSNSSRWWPLDAGDANTSGDLAGLGEDGGPQADTRNEELAK) the chain is on the extracellular side. Asn13 and Asn26 each carry an N-linked (GlcNAc...) asparagine glycan. A helical transmembrane segment spans residues 52–75 (LEIAVLAVIFVVAVLGNSSVLLAL). The Cytoplasmic portion of the chain corresponds to 76–87 (HRTPRKTSRMHL). Residues 88–109 (FIRHLSLADLAVAFFQVLPQLG) traverse the membrane as a helical segment. The Extracellular portion of the chain corresponds to 110 to 124 (WDITYRFRGPDGLCR). A disulfide bridge links Cys123 with Cys202. A helical membrane pass occupies residues 125–146 (VVKHMQVFAMFASAYMLVVMTA). Residues 147–167 (DRYIAVCHPLKTLQQPARRSR) lie on the Cytoplasmic side of the membrane. The helical transmembrane segment at 168 to 189 (LMIAAAWVLSFVLSTPQYFVFS) threads the bilayer. The Extracellular segment spans residues 190–217 (MVEVSNVTKTYDCWANFIHPWGLPAYVT). An N-linked (GlcNAc...) asparagine glycan is attached at Asn195. The chain crosses the membrane as a helical span at residues 218-238 (WMTGSVFVAPVVILGTCYGFI). The Cytoplasmic portion of the chain corresponds to 239–293 (CYHIWRKVRGKTAGRQGGPAEGAGESALYRGVLHARCVSSVKTISRAKIRTVKMT). Residues 294–313 (FVIVTAYIVCWAPFFIIQMW) traverse the membrane as a helical segment. The Extracellular portion of the chain corresponds to 314–331 (SAWDKNFSWVESENPATA). Asn319 is a glycosylation site (N-linked (GlcNAc...) asparagine). The helical transmembrane segment at 332 to 351 (IPALLASLNSCCNPWIYMFF) threads the bilayer. Residues 352-418 (SGHLLQDCAQ…KSIKFIPVST (67 aa)) are Cytoplasmic-facing. Residues Cys365 and Cys366 are each lipidated (S-palmitoyl cysteine). Residues 377 to 418 (GSDSMSRRQTSFTNNRSPTNSMGTWKDSPKSSKSIKFIPVST) form a disordered region. Residues 383 to 399 (RRQTSFTNNRSPTNSMG) show a composition bias toward polar residues. The residue at position 404 (Ser404) is a Phosphoserine.

This sequence belongs to the G-protein coupled receptor 1 family. Vasopressin/oxytocin receptor subfamily.

The protein resides in the cell membrane. Receptor for arginine vasopressin. The activity of this receptor is mediated by G proteins which activate a phosphatidyl-inositol-calcium second messenger system. This is Vasopressin V1a receptor (AVPR1A) from Ovis aries (Sheep).